Reading from the N-terminus, the 275-residue chain is Large ribosomal subunit protein uL2 (275 aa).

Disordered stretches follow at residues 28 to 59 (KPYAPLLDTQSSTAGRNNNGHITTRHKGGGHK) and 224 to 275 (AMNP…RHKR). The span at 35-46 (DTQSSTAGRNNN) shows a compositional bias: polar residues. The segment covering 50-59 (TTRHKGGGHK) has biased composition (basic residues).

The protein belongs to the universal ribosomal protein uL2 family. As to quaternary structure, part of the 50S ribosomal subunit. Forms a bridge to the 30S subunit in the 70S ribosome.

Functionally, one of the primary rRNA binding proteins. Required for association of the 30S and 50S subunits to form the 70S ribosome, for tRNA binding and peptide bond formation. It has been suggested to have peptidyltransferase activity; this is somewhat controversial. Makes several contacts with the 16S rRNA in the 70S ribosome. This is Large ribosomal subunit protein uL2 from Paraburkholderia phymatum (strain DSM 17167 / CIP 108236 / LMG 21445 / STM815) (Burkholderia phymatum).